The sequence spans 208 residues: Heart- and neural crest derivatives-expressed protein 2 (208 aa).

Disordered regions lie at residues 79–106 (AGAVGMGPRTVKRRPTANRKERRRTQSI) and 161–197 (EFKKTDAKEERRKKEMNDVLKSSGSSNDKKTKGRTGW). Residues 88–103 (TVKRRPTANRKERRRT) show a composition bias toward basic residues. The bHLH domain occupies 90–142 (KRRPTANRKERRRTQSINSAFAELRECIPNVPADTKLSKIKTLRLATSYIAYL). Residues 161 to 178 (EFKKTDAKEERRKKEMND) show a composition bias toward basic and acidic residues.

As to quaternary structure, efficient DNA binding requires dimerization with another bHLH protein.

Its subcellular location is the nucleus. Essential for myocardial and pectoral fin differentiation, patterning and morphogenesis. This is Heart- and neural crest derivatives-expressed protein 2 (hand2) from Danio rerio (Zebrafish).